The sequence spans 150 residues: Macrodomain Ter protein (150 aa).

It belongs to the MatP family. Homodimer.

It localises to the cytoplasm. Functionally, required for spatial organization of the terminus region of the chromosome (Ter macrodomain) during the cell cycle. Prevents early segregation of duplicated Ter macrodomains during cell division. Binds specifically to matS, which is a 13 bp signature motif repeated within the Ter macrodomain. The chain is Macrodomain Ter protein from Shigella boydii serotype 18 (strain CDC 3083-94 / BS512).